The following is a 180-amino-acid chain: ATP synthase subunit b 2 (180 aa).

The helical transmembrane segment at 33-53 threads the bilayer; sequence IFWLLVTLVAIYFLLTRVALP.

The protein belongs to the ATPase B chain family. F-type ATPases have 2 components, F(1) - the catalytic core - and F(0) - the membrane proton channel. F(1) has five subunits: alpha(3), beta(3), gamma(1), delta(1), epsilon(1). F(0) has three main subunits: a(1), b(2) and c(10-14). The alpha and beta chains form an alternating ring which encloses part of the gamma chain. F(1) is attached to F(0) by a central stalk formed by the gamma and epsilon chains, while a peripheral stalk is formed by the delta and b chains.

Its subcellular location is the cell inner membrane. In terms of biological role, f(1)F(0) ATP synthase produces ATP from ADP in the presence of a proton or sodium gradient. F-type ATPases consist of two structural domains, F(1) containing the extramembraneous catalytic core and F(0) containing the membrane proton channel, linked together by a central stalk and a peripheral stalk. During catalysis, ATP synthesis in the catalytic domain of F(1) is coupled via a rotary mechanism of the central stalk subunits to proton translocation. Functionally, component of the F(0) channel, it forms part of the peripheral stalk, linking F(1) to F(0). The b'-subunit is a diverged and duplicated form of b found in plants and photosynthetic bacteria. The polypeptide is ATP synthase subunit b 2 (atpF2) (Cereibacter sphaeroides (strain ATCC 17025 / ATH 2.4.3) (Rhodobacter sphaeroides)).